A 106-amino-acid chain; its full sequence is Large ribosomal subunit protein uL24 (106 aa).

It belongs to the universal ribosomal protein uL24 family. In terms of assembly, part of the 50S ribosomal subunit.

Its function is as follows. One of two assembly initiator proteins, it binds directly to the 5'-end of the 23S rRNA, where it nucleates assembly of the 50S subunit. Functionally, one of the proteins that surrounds the polypeptide exit tunnel on the outside of the subunit. The sequence is that of Large ribosomal subunit protein uL24 from Porphyromonas gingivalis (strain ATCC 33277 / DSM 20709 / CIP 103683 / JCM 12257 / NCTC 11834 / 2561).